Consider the following 312-residue polypeptide: MADGDSGSERGGGGGPCGFQPASRGGGEQETQELASKRLDIQNKRFYLDVKQNAKGRFLKIAEVGAGGSKSRLTLSMAVAAEFRDSLGDFIEHYAQLGPSSPEQLAAGAEEGGGPRRALKSEFLVRENRKYYLDLKENQRGRFLRIRQTVNRGGGGFGAGPGPGGLQSGQTIALPAQGLIEFRDALAKLIDDYGGEDDELAGGPGGGAGGPGGGLYGELPEGTSITVDSKRFFFDVGCNKYGVFLRVSEVKPSYRNAITVPFKAWGKFGGAFCRYADEMKEIQERQRDKLYERRGGGSGGGEESEGEEVDED.

A disordered region spans residues 1–32 (MADGDSGSERGGGGGPCGFQPASRGGGEQETQ). A2 carries the N-acetylalanine modification. Residues S6 and S8 each carry the phosphoserine modification. R24 bears the Omega-N-methylarginine mark. Residues 28 to 254 (EQETQELASK…LRVSEVKPSY (227 aa)) form a DNA-binding region. T31 is modified (phosphothreonine). S101 is subject to Phosphoserine. R152 bears the Omega-N-methylarginine mark. K267 is modified (N6-acetyllysine). Residues 284–295 (ERQRDKLYERRG) are compositionally biased toward basic and acidic residues. A disordered region spans residues 284 to 312 (ERQRDKLYERRGGGSGGGEESEGEEVDED). Position 294 is an omega-N-methylarginine (R294). S298 and S304 each carry phosphoserine. The span at 302-312 (EESEGEEVDED) shows a compositional bias: acidic residues.

This sequence belongs to the PUR DNA-binding protein family. In terms of assembly, homodimer, heterodimer with PURA and heterotrimer with PURA and YBX1/Y-box protein 1. Interacts with MYOCD and SRF. As to expression, expressed in myocardium of heart failure patients.

It is found in the nucleus. Its function is as follows. Transcriptional regulator which can act as an activator or a repressor. Represses the transcription of ACTA2 in fibroblasts and smooth muscle cells via its ability to interact with the purine-rich strand of a MCAT- containing element in the 5' flanking region of the gene. Represses the transcription of MYOCD, capable of repressing all isoforms of MYOCD but the magnitude of the repressive effects is most notable for the SMC- specific isoforms. Promotes hepatic glucose production by activating the transcription of ADCY6, leading to cAMP accumulation, increased PKA activity, CREB activation, and increased transcription of PCK1 and G6PC genes. Has capacity to bind repeated elements in single-stranded DNA such as the purine-rich single strand of the PUR element located upstream of the MYC gene. Participates in transcriptional and translational regulation of alpha-MHC expression in cardiac myocytes by binding to the purine-rich negative regulatory (PNR) element Modulates constitutive liver galectin-3 gene transcription by binding to its promoter. May play a role in the dendritic transport of a subset of mRNAs. In Homo sapiens (Human), this protein is Transcriptional regulator protein Pur-beta (PURB).